The following is a 728-amino-acid chain: 1,4-alpha-glucan branching enzyme GlgB (728 aa).

Asp405 acts as the Nucleophile in catalysis. Glu458 (proton donor) is an active-site residue. Residues 686–712 (YHGSNAGNAGAVQSDEHESHGRPHSLS) are disordered.

Belongs to the glycosyl hydrolase 13 family. GlgB subfamily. In terms of assembly, monomer.

It carries out the reaction Transfers a segment of a (1-&gt;4)-alpha-D-glucan chain to a primary hydroxy group in a similar glucan chain.. The protein operates within glycan biosynthesis; glycogen biosynthesis. In terms of biological role, catalyzes the formation of the alpha-1,6-glucosidic linkages in glycogen by scission of a 1,4-alpha-linked oligosaccharide from growing alpha-1,4-glucan chains and the subsequent attachment of the oligosaccharide to the alpha-1,6 position. This is 1,4-alpha-glucan branching enzyme GlgB from Enterobacter sp. (strain 638).